Consider the following 187-residue polypeptide: Transcriptional regulator VspR (187 aa).

Its function is as follows. Represses the transcription of several genes encoded within the Vibrio 7th pandemic island-1 (VSP-1), including dncV, VC_0176, VC_0178 and VC_0180. This chain is Transcriptional regulator VspR (vspR), found in Vibrio cholerae serotype O1 (strain ATCC 39315 / El Tor Inaba N16961).